Reading from the N-terminus, the 445-residue chain is Phosphoglucosamine mutase (445 aa).

Residue Ser-102 is the Phosphoserine intermediate of the active site. Mg(2+) is bound by residues Ser-102, Asp-240, Asp-242, and Asp-244. Residue Ser-102 is modified to Phosphoserine.

It belongs to the phosphohexose mutase family. Mg(2+) is required as a cofactor. Activated by phosphorylation.

The enzyme catalyses alpha-D-glucosamine 1-phosphate = D-glucosamine 6-phosphate. Functionally, catalyzes the conversion of glucosamine-6-phosphate to glucosamine-1-phosphate. This is Phosphoglucosamine mutase from Mycolicibacterium gilvum (strain PYR-GCK) (Mycobacterium gilvum (strain PYR-GCK)).